Reading from the N-terminus, the 101-residue chain is NAD(P)H-quinone oxidoreductase subunit 4L, chloroplastic (101 aa).

Helical transmembrane passes span 2–22 (MLEH…YGLI), 32–52 (MCLE…SDFF), and 61–81 (IFSI…LAIV).

It belongs to the complex I subunit 4L family. As to quaternary structure, NDH is composed of at least 16 different subunits, 5 of which are encoded in the nucleus.

The protein resides in the plastid. It is found in the chloroplast thylakoid membrane. It carries out the reaction a plastoquinone + NADH + (n+1) H(+)(in) = a plastoquinol + NAD(+) + n H(+)(out). It catalyses the reaction a plastoquinone + NADPH + (n+1) H(+)(in) = a plastoquinol + NADP(+) + n H(+)(out). In terms of biological role, NDH shuttles electrons from NAD(P)H:plastoquinone, via FMN and iron-sulfur (Fe-S) centers, to quinones in the photosynthetic chain and possibly in a chloroplast respiratory chain. The immediate electron acceptor for the enzyme in this species is believed to be plastoquinone. Couples the redox reaction to proton translocation, and thus conserves the redox energy in a proton gradient. This chain is NAD(P)H-quinone oxidoreductase subunit 4L, chloroplastic, found in Cicer arietinum (Chickpea).